Consider the following 327-residue polypeptide: Pyruvate dehydrogenase E1 component subunit beta (327 aa).

Residue Glu60 participates in thiamine diphosphate binding. K(+) contacts are provided by Ile113, Ala161, Ile162, and Asn166.

Heterodimer of an alpha and a beta chain. Requires thiamine diphosphate as cofactor.

It is found in the plastid. Its subcellular location is the chloroplast. The catalysed reaction is N(6)-[(R)-lipoyl]-L-lysyl-[protein] + pyruvate + H(+) = N(6)-[(R)-S(8)-acetyldihydrolipoyl]-L-lysyl-[protein] + CO2. The pyruvate dehydrogenase complex catalyzes the overall conversion of pyruvate to acetyl-CoA and CO(2). It contains multiple copies of three enzymatic components: pyruvate dehydrogenase (E1), dihydrolipoamide acetyltransferase (E2) and lipoamide dehydrogenase (E3). The chain is Pyruvate dehydrogenase E1 component subunit beta (pdhB) from Mesostigma viride (Green alga).